The sequence spans 338 residues: Malate dehydrogenase, mitochondrial (338 aa).

The transit peptide at 1–24 (MLSALARPAGAALRRSFSTSAQNN) directs the protein to the mitochondrion. NAD(+) contacts are provided by residues 31–37 (GASGGIG) and Asp-57. Ser-33 is a glycosylation site (O-linked (GlcNAc) serine). N6-acetyllysine; alternate occurs at positions 78 and 91. An N6-succinyllysine; alternate mark is found at Lys-78 and Lys-91. 2 residues coordinate substrate: Arg-104 and Arg-110. NAD(+) is bound by residues Asn-117 and 140–142 (ISN). Substrate is bound at residue Asn-142. At Lys-165 the chain carries N6-acetyllysine. Arg-176 is a substrate binding site. At Lys-185 the chain carries N6-acetyllysine; alternate. Lys-185 is subject to N6-succinyllysine; alternate. The Proton acceptor role is filled by His-200. The residue at position 203 (Lys-203) is an N6-succinyllysine. Residues Lys-215 and Lys-239 each carry the N6-acetyllysine; alternate modification. 2 positions are modified to N6-succinyllysine; alternate: Lys-215 and Lys-239. N6-malonyllysine; alternate is present on Lys-239. Position 246 is a phosphoserine (Ser-246). Position 251 (Met-251) interacts with NAD(+). Lys-269 is modified (N6-succinyllysine). 5 positions are modified to N6-acetyllysine; alternate: Lys-296, Lys-301, Lys-307, Lys-314, and Lys-324. An N6-succinyllysine; alternate mark is found at Lys-296, Lys-301, Lys-307, Lys-314, and Lys-324. Lys-307 carries the N6-malonyllysine; alternate modification. At Ser-326 the chain carries Phosphoserine. N6-acetyllysine; alternate occurs at positions 328, 329, and 335. At Lys-328 the chain carries N6-succinyllysine; alternate. At Lys-329 the chain carries N6-malonyllysine; alternate. Lys-335 bears the N6-succinyllysine; alternate mark.

Belongs to the LDH/MDH superfamily. MDH type 1 family. Homodimer. Acetylation is enhanced after treatment either with trichostin A (TCA) or with nicotinamide (NAM) with the appearance of tri- and tetraacetylations. Glucose also increases acetylation.

It localises to the mitochondrion matrix. The catalysed reaction is (S)-malate + NAD(+) = oxaloacetate + NADH + H(+). Enzyme activity is enhanced by acetylation. In Bos taurus (Bovine), this protein is Malate dehydrogenase, mitochondrial (MDH2).